Reading from the N-terminus, the 141-residue chain is ATP synthase epsilon chain (141 aa).

The protein belongs to the ATPase epsilon chain family. In terms of assembly, F-type ATPases have 2 components, CF(1) - the catalytic core - and CF(0) - the membrane proton channel. CF(1) has five subunits: alpha(3), beta(3), gamma(1), delta(1), epsilon(1). CF(0) has three main subunits: a, b and c.

It localises to the cell inner membrane. Its function is as follows. Produces ATP from ADP in the presence of a proton gradient across the membrane. The sequence is that of ATP synthase epsilon chain from Chromohalobacter salexigens (strain ATCC BAA-138 / DSM 3043 / CIP 106854 / NCIMB 13768 / 1H11).